A 410-amino-acid polypeptide reads, in one-letter code: Phospho-N-acetylmuramoyl-pentapeptide-transferase (410 aa).

A run of 10 helical transmembrane segments spans residues 23–43, 73–93, 96–116, 132–152, 215–235, 248–268, 285–305, 307–327, 332–352, and 387–407; these read YITFRSALAFMLSLLLSTIYG, TPTMGGLIIIFATLVPVFLFA, HNIYIVLLIVTTLWMGTIGFV, GIFKVIGQVGLGIIVGAVLYF, WAWLVFIPVVIFIITAVSNGA, TSAVSVLALGIFTFVSGNIIF, VFISAFVGALIGFLWYNSFPA, VFMGDTGSLTIGGIIAVLAIA, ILIVLFCGIFLAESASVIIQV, and KIVTRFWIVAVMLAILSIVTL.

This sequence belongs to the glycosyltransferase 4 family. MraY subfamily. Requires Mg(2+) as cofactor.

It localises to the cell inner membrane. The enzyme catalyses UDP-N-acetyl-alpha-D-muramoyl-L-alanyl-gamma-D-glutamyl-meso-2,6-diaminopimeloyl-D-alanyl-D-alanine + di-trans,octa-cis-undecaprenyl phosphate = di-trans,octa-cis-undecaprenyl diphospho-N-acetyl-alpha-D-muramoyl-L-alanyl-D-glutamyl-meso-2,6-diaminopimeloyl-D-alanyl-D-alanine + UMP. It functions in the pathway cell wall biogenesis; peptidoglycan biosynthesis. Functionally, catalyzes the initial step of the lipid cycle reactions in the biosynthesis of the cell wall peptidoglycan: transfers peptidoglycan precursor phospho-MurNAc-pentapeptide from UDP-MurNAc-pentapeptide onto the lipid carrier undecaprenyl phosphate, yielding undecaprenyl-pyrophosphoryl-MurNAc-pentapeptide, known as lipid I. The sequence is that of Phospho-N-acetylmuramoyl-pentapeptide-transferase from Flavobacterium johnsoniae (strain ATCC 17061 / DSM 2064 / JCM 8514 / BCRC 14874 / CCUG 350202 / NBRC 14942 / NCIMB 11054 / UW101) (Cytophaga johnsonae).